The sequence spans 89 residues: Small ribosomal subunit protein uS14 (89 aa).

Positions 32–51 are disordered; sequence DYEGLQKLPKNSSPVRLHNR.

This sequence belongs to the universal ribosomal protein uS14 family. Part of the 30S ribosomal subunit. Contacts proteins S3 and S10.

In terms of biological role, binds 16S rRNA, required for the assembly of 30S particles and may also be responsible for determining the conformation of the 16S rRNA at the A site. The polypeptide is Small ribosomal subunit protein uS14 (Christiangramia forsetii (strain DSM 17595 / CGMCC 1.15422 / KT0803) (Gramella forsetii)).